The primary structure comprises 280 residues: Phospholipase C D (280 aa).

The interval 258-280 (VPDPQIMPTQETTPTRGIPSGPC) is disordered.

The protein belongs to the bacterial phospholipase C family.

It is found in the secreted. Its subcellular location is the cell wall. It catalyses the reaction a 1,2-diacyl-sn-glycero-3-phosphocholine + H2O = phosphocholine + a 1,2-diacyl-sn-glycerol + H(+). It carries out the reaction 1,2-dihexadecanoyl-sn-glycero-3-phosphocholine + H2O = 1,2-dihexadecanoyl-sn-glycerol + phosphocholine + H(+). In terms of biological role, involved in virulence. Induces cytotoxic effects on mouse macrophage cell lines, via direct or indirect enzymatic hydrolysis of cell membrane phospholipids. Hydrolyzes phosphatidylcholine. Does not have hemolytic activity. The sequence is that of Phospholipase C D from Mycobacterium tuberculosis (strain ATCC 25618 / H37Rv).